The chain runs to 74 residues: Brevinin-2Ef (74 aa).

A signal peptide spans 1-22 (MFTMKKSLLLIFFLGTISLSLC). Positions 23–41 (QEERNADDDDGEMTEEEKR) are excised as a propeptide. Cysteines 68 and 74 form a disulfide.

This sequence belongs to the frog skin active peptide (FSAP) family. Brevinin subfamily. In terms of tissue distribution, expressed by the skin glands.

The protein localises to the secreted. Its function is as follows. Shows antibacterial activity against representative Gram-negative and Gram-positive bacterial species, and hemolytic activity. The polypeptide is Brevinin-2Ef (Pelophylax lessonae (Pool frog)).